Reading from the N-terminus, the 590-residue chain is Probable metalloendopeptidase G1-type (590 aa).

Residue His41 coordinates Zn(2+). Glu44 is an active-site residue. Residue His45 participates in Zn(2+) binding.

Belongs to the peptidase M44 family. Zn(2+) is required as a cofactor.

Functionally, seems to be involved in viral proteins maturation by cleavage at Ala-Gly-|-Xaa motifs. The chain is Probable metalloendopeptidase G1-type from Oryctolagus cuniculus (Rabbit).